The chain runs to 431 residues: Glutamate-1-semialdehyde 2,1-aminomutase (431 aa).

Lys-269 carries the N6-(pyridoxal phosphate)lysine modification.

The protein belongs to the class-III pyridoxal-phosphate-dependent aminotransferase family. HemL subfamily. In terms of assembly, homodimer. The cofactor is pyridoxal 5'-phosphate.

The protein resides in the cytoplasm. It carries out the reaction (S)-4-amino-5-oxopentanoate = 5-aminolevulinate. It participates in porphyrin-containing compound metabolism; protoporphyrin-IX biosynthesis; 5-aminolevulinate from L-glutamyl-tRNA(Glu): step 2/2. This chain is Glutamate-1-semialdehyde 2,1-aminomutase, found in Francisella tularensis subsp. holarctica (strain LVS).